Consider the following 1153-residue polypeptide: MFNQEQGTDYPVLNKKKLESLANLKLAMGGHEYPTDDLTQQGLKLAGPLLEEVEESEVNHTTAPIDARLQTFLNSYFAECGEEVPKIPDDTFILDREGLGRVLSFPPHKQEFFCETMKSYKIKQGVLHNPAKDKRTTVGVFHICQSDVPVPADKIECPKIAFLRMLKAAFYGAPDDHLIIPYTAECKEPTRSWVSLYMRPVVVPGVKGVKGFEHEKATEMHFFVPGNMVSCLDFVESVFGNAGNPRLSKNDAALDPLGWTGHSGMAILAPHLTRMTKKECGLPHISQATERQKRERMCWEKEDELYNDGKTFKMYCRDASGVICTIIADNYFGYCKKEVKTQISYSANLYGFAEEEHAGGAIARPSYDLGESCDASKYAEGYKFSEMVEKNKHSIIVKEEGYAVDKKYPEGIIYVPEDSVFTIEDASIKFNHNGKEESILLTPKVNYVLPNGYTIILHDTMTSRRWTLRGILPQYTLCHKPCTVSGGGKSEISKSIRDAVIEGSVFVNNKEEDFKAVQKVFDHDFSKRYANGEVKPIHILDPNVTLGTVVELLTPSHLFTKEHNDYISSISPLIVELVMTIKSLYREDWKGDWQSRITVDKINGNEGNELKYRGANLSSQYLRVGFERDETTWRVFQLRKDFFPAAKLQMEDDITASVIVPTKLLKTPINNMQKKACKIVKNCELRLFQRPDDAVFRGFDKQTEYDFSIPGHFISNYQPMTREEAKDFTKDVVRLYQYTEPMRKCLQDFVAGKDEAKYIVSSSYTRLVPEGDKLVGSKNPRYLQRRPDMLDPEYTYMTFKAIQLYRKISDEEPLYTPVDAVLSGRRNNPPQVAKNGMKLRPLSVFAPLHYFELPELLMECITSMTGASPSMFGAGSEGALTKGPFNSLPAVVDLNNYLLGMICCGYSGFVSSASYCGPHYKVAHDISLLIPEIWSKMIRYEQEPKYLIEHGYLEPCPDVTYNGKTYSGKRLGYRITTAFANHFLRTLFSMPNSVMPEDFLKPELQDLAIYADSYEYMSQTDKGIAMNYVKDGTVEGACPPLKALIYIMANGEYNGMTRESKEFREMFDPEVVLNSEWYKERLVTRQKLEVAKLNKDLAYLNKTIAEKPRLAETLNKQIAAVKEELQYVSSEEYLHDINGSIGTDPYPYKCMKH.

Residues 1085 to 1131 (RQKLEVAKLNKDLAYLNKTIAEKPRLAETLNKQIAAVKEELQYVSSE) are a coiled coil.

This sequence belongs to the PPi-type phosphoenolpyruvate carboxykinase family. In terms of assembly, monomer and trimer; forms heterotrimers with PEPCK1 and PEPCK2.

Its subcellular location is the cytoplasm. The protein resides in the cytosol. It carries out the reaction oxaloacetate + diphosphate = phosphoenolpyruvate + phosphate + CO2. Its function is as follows. Inorganic pyrophosphate (PPi)-dependent phosphoenolpyruvate carboxykinase, which regulates the carbon flow of the central metabolism by fixing CO(2) to phosphoenolpyruvate to produce oxaloacetate. Can also produce pyruvate and diphosphate from phosphoenolpyruvate and phosphate. In Entamoeba histolytica (strain ATCC 30459 / HM-1:IMSS / ABRM), this protein is PPi-type phosphoenolpyruvate carboxykinase 3.